The primary structure comprises 495 residues: Glutamate--tRNA ligase (495 aa).

The 'HIGH' region signature appears at 14-24; it reads PSPTGYLHIGS. The 'KMSKS' region signature appears at 255–259; the sequence is KLSKR. Residue lysine 258 coordinates ATP.

It belongs to the class-I aminoacyl-tRNA synthetase family. Glutamate--tRNA ligase type 1 subfamily. As to quaternary structure, monomer.

It localises to the cytoplasm. It carries out the reaction tRNA(Glu) + L-glutamate + ATP = L-glutamyl-tRNA(Glu) + AMP + diphosphate. Functionally, catalyzes the attachment of glutamate to tRNA(Glu) in a two-step reaction: glutamate is first activated by ATP to form Glu-AMP and then transferred to the acceptor end of tRNA(Glu). This Herpetosiphon aurantiacus (strain ATCC 23779 / DSM 785 / 114-95) protein is Glutamate--tRNA ligase.